We begin with the raw amino-acid sequence, 217 residues long: Biotin transport regulator (217 aa).

The disordered stretch occupies residues 14–49 (GDGLGNLAGRSADPTGAADKGESGVPVPPTGFVDPT).

May be part of a system that R.meliloti uses to respond to plant (alfalfa) biotin signals. This chain is Biotin transport regulator (bioS), found in Rhizobium meliloti (strain 1021) (Ensifer meliloti).